A 94-amino-acid chain; its full sequence is Putative pterin-4-alpha-carbinolamine dehydratase (94 aa).

It belongs to the pterin-4-alpha-carbinolamine dehydratase family.

The catalysed reaction is (4aS,6R)-4a-hydroxy-L-erythro-5,6,7,8-tetrahydrobiopterin = (6R)-L-erythro-6,7-dihydrobiopterin + H2O. This chain is Putative pterin-4-alpha-carbinolamine dehydratase, found in Mycobacteroides abscessus (strain ATCC 19977 / DSM 44196 / CCUG 20993 / CIP 104536 / JCM 13569 / NCTC 13031 / TMC 1543 / L948) (Mycobacterium abscessus).